The primary structure comprises 806 residues: Leucine--tRNA ligase (806 aa).

Positions 40–51 (PYPSGQGLHVGH) match the 'HIGH' region motif. Positions 578–582 (KMSKS) match the 'KMSKS' region motif. Lys-581 lines the ATP pocket.

It belongs to the class-I aminoacyl-tRNA synthetase family.

It is found in the cytoplasm. It carries out the reaction tRNA(Leu) + L-leucine + ATP = L-leucyl-tRNA(Leu) + AMP + diphosphate. In Limosilactobacillus reuteri (strain DSM 20016) (Lactobacillus reuteri), this protein is Leucine--tRNA ligase.